Here is a 269-residue protein sequence, read N- to C-terminus: MSDEEVEQVEEQYEEEEEAQEEAAEVHEEVHEPEEVQEDTAEEDAEEEKPRPKLTAPKIPEGEKVDFDDIQKKRQNKDLMELQALIDSHFEARKKEEEELVALKERIEKRRAERAEQQRIRAEKERERQNRLAEEKARREEEDAKRRAEDDLKKKKALSSMGANYSSYLAKADQKRGKKQTAREMKKKILAERRKPLNIDHLGEDKLRDKAKELWETLHQLEIDKFEFGEKLKRQKYDITTLRSRIDQAQKHSKKAGTPAKGKVGGRWK.

The span at Met1–Ala23 shows a compositional bias: acidic residues. Residues Met1 to Lys72 are disordered. Ser2 bears the N-acetylserine mark. Position 2 is a phosphoserine (Ser2). The span at Ala24–Glu34 shows a compositional bias: basic and acidic residues. The span at Glu35–Glu47 shows a compositional bias: acidic residues. Positions Pro60–Lys72 are enriched in basic and acidic residues. Ser88 bears the Phosphoserine mark. A compositionally biased stretch (basic and acidic residues) spans Arg111–Lys153. Residues Arg111–Leu158 are disordered. 3 positions are modified to phosphoserine: Ser159, Ser166, and Ser167. The disordered stretch occupies residues Arg245–Lys269.

This sequence belongs to the troponin T family. As to expression, in fetal and adult fast skeletal muscles, with a higher level expression in fetal than in adult muscle.

Troponin T is the tropomyosin-binding subunit of troponin, the thin filament regulatory complex which confers calcium-sensitivity to striated muscle actomyosin ATPase activity. This chain is Troponin T, fast skeletal muscle (TNNT3), found in Homo sapiens (Human).